We begin with the raw amino-acid sequence, 359 residues long: AA9 family lytic polysaccharide monooxygenase B (359 aa).

The first 18 residues, 1-18 (MQLFTSFSLLAVASFASA), serve as a signal peptide directing secretion. Cu(2+)-binding residues include histidine 19 and histidine 102. 2 cysteine pairs are disulfide-bonded: cysteine 72-cysteine 190 and cysteine 113-cysteine 117. An N-linked (GlcNAc...) asparagine glycan is attached at asparagine 150. Positions 176 and 185 each coordinate O2. A Cu(2+)-binding site is contributed by tyrosine 187. Residues 241-310 (GGSPGNSAEP…STNINPTSLK (70 aa)) are disordered. Residues 245–254 (GNSAEPQPQH) show a composition bias toward polar residues. Residues 255-304 (TSTAVSTAKTASTSSLTTSVTITSQAPSNTANPPQSITTTTTPKPQSTNI) are compositionally biased toward low complexity. Asparagine 345 carries N-linked (GlcNAc...) asparagine glycosylation.

The protein belongs to the polysaccharide monooxygenase AA9 family. Cu(2+) is required as a cofactor.

The protein localises to the secreted. The enzyme catalyses [(1-&gt;4)-beta-D-glucosyl]n+m + reduced acceptor + O2 = 4-dehydro-beta-D-glucosyl-[(1-&gt;4)-beta-D-glucosyl]n-1 + [(1-&gt;4)-beta-D-glucosyl]m + acceptor + H2O.. Lytic polysaccharide monooxygenase (LPMO) that depolymerizes crystalline and amorphous polysaccharides via the oxidation of scissile alpha- or beta-(1-4)-glycosidic bonds, yielding C1 and C4 oxidation products. Catalysis by LPMOs requires the reduction of the active-site copper from Cu(II) to Cu(I) by a reducing agent and H(2)O(2) or O(2) as a cosubstrate. Active on cellulose and on xyloglucan for deconstruction of plant biomass. The sequence is that of AA9 family lytic polysaccharide monooxygenase B from Geotrichum candidum (Oospora lactis).